We begin with the raw amino-acid sequence, 229 residues long: Large ribosomal subunit protein uL3 (229 aa).

N5-methylglutamine is present on glutamine 151.

Belongs to the universal ribosomal protein uL3 family. In terms of assembly, part of the 50S ribosomal subunit. Forms a cluster with proteins L14 and L19. Methylated by PrmB.

Its function is as follows. One of the primary rRNA binding proteins, it binds directly near the 3'-end of the 23S rRNA, where it nucleates assembly of the 50S subunit. The polypeptide is Large ribosomal subunit protein uL3 (Paramagnetospirillum magneticum (strain ATCC 700264 / AMB-1) (Magnetospirillum magneticum)).